Consider the following 158-residue polypeptide: MNVVQGNIESKNAKIAIVVSRFNSFVVESLLDGAVDTLKRFGQVADDNITVIKVPGAVELPLAARRVAASGKFDGIISLGAVIRGGTPHFDLVAGECNKGLAQVALEYDIPVSFGVLTTDTIEQAIERSGTKAGNKGGEAALGLLEMVNVLQALEEQL.

5-amino-6-(D-ribitylamino)uracil is bound by residues Phe-22, 57 to 59 (AVE), and 81 to 83 (AVI). Residue 86–87 (GT) coordinates (2S)-2-hydroxy-3-oxobutyl phosphate. His-89 functions as the Proton donor in the catalytic mechanism. Position 114 (Phe-114) interacts with 5-amino-6-(D-ribitylamino)uracil. Position 128 (Arg-128) interacts with (2S)-2-hydroxy-3-oxobutyl phosphate.

It belongs to the DMRL synthase family. In terms of assembly, forms an icosahedral capsid composed of 60 subunits, arranged as a dodecamer of pentamers.

The enzyme catalyses (2S)-2-hydroxy-3-oxobutyl phosphate + 5-amino-6-(D-ribitylamino)uracil = 6,7-dimethyl-8-(1-D-ribityl)lumazine + phosphate + 2 H2O + H(+). It functions in the pathway cofactor biosynthesis; riboflavin biosynthesis; riboflavin from 2-hydroxy-3-oxobutyl phosphate and 5-amino-6-(D-ribitylamino)uracil: step 1/2. Functionally, catalyzes the formation of 6,7-dimethyl-8-ribityllumazine by condensation of 5-amino-6-(D-ribitylamino)uracil with 3,4-dihydroxy-2-butanone 4-phosphate. This is the penultimate step in the biosynthesis of riboflavin. The sequence is that of 6,7-dimethyl-8-ribityllumazine synthase from Shewanella piezotolerans (strain WP3 / JCM 13877).